The following is a 194-amino-acid chain: ATP synthase subunit 5, mitochondrial (194 aa).

As to quaternary structure, F-type ATP synthases have 2 components, the catalytic core F(1) and the membrane-embedded component F(0), linked together by a central stalk and a peripheral stalk. The central stalk, also called rotor shaft, is often seen as part of F(1). The peripheral stalk is seen as part of F(0). F(0) contains the membrane channel next to the rotor. F-type ATP synthases form dimers but each monomer functions independently in ATP generation. The dimer consists of 18 different polypeptides: ATP1 (subunit alpha, part of F(1), 3 molecules per monomer), ATP2 (subunit beta, part of F(1), 3 molecules per monomer), ATP3 (subunit gamma, part of the central stalk), ATP4 (subunit b, part of the peripheral stalk), ATP5/OSCP (subunit 5/OSCP, part of the peripheral stalk), ATP6 (subunit a, part of the peripheral stalk), ATP7 (subunit d, part of the peripheral stalk), ATP8 (subunit 8, part of the peripheral stalk), OLI1 (subunit c, part of the rotor, 10 molecules per monomer), ATP14 (subunit h, part of the peripheral stalk), ATP15 (subunit epsilon, part of the central stalk), ATP16 (subunit delta, part of the central stalk), ATP17 (subunit f, part of the peripheral stalk), ATP18 (subunit i/j, part of the peripheral stalk). Dimer-specific subunits are ATP19 (subunit k, at interface between monomers), ATP20 (subunit g, at interface between monomers), TIM11 (subunit e, at interface between monomers). Also contains subunit L.

It is found in the mitochondrion inner membrane. Mitochondrial membrane ATP synthase (F(1)F(0) ATP synthase or Complex V) produces ATP from ADP in the presence of a proton gradient across the membrane which is generated by electron transport complexes of the respiratory chain. F-type ATP synthases consist of two structural domains, F(1) - containing the extramembraneous catalytic core, and F(0) - containing the membrane proton channel, linked together by a central stalk and a peripheral stalk. During catalysis, ATP synthesis in the catalytic domain of F(1) is coupled via a rotary mechanism of the central stalk subunits to proton translocation. Part of the complex F(0) domain and the peripheral stalk, which acts as a stator to hold the catalytic alpha/ATP1(3)beta/ATP2(3) subcomplex and subunit a/ATP6 static relative to the rotary elements. The sequence is that of ATP synthase subunit 5, mitochondrial from Pichia angusta (Yeast).